Consider the following 318-residue polypeptide: Ribose-phosphate pyrophosphokinase 3 (318 aa).

Residue 96-101 (RQDKKD) participates in ATP binding. Mg(2+)-binding residues include Asp-128, His-130, Asp-139, and Asp-143. An ATP-binding site is contributed by His-130. Residues 212–227 (NDRVAILVDDMADTCV) form a binding of phosphoribosylpyrophosphate region.

It belongs to the ribose-phosphate pyrophosphokinase family. As to quaternary structure, homodimer. The active form is probably a hexamer composed of 3 homodimers. It depends on Mg(2+) as a cofactor. As to expression, testis.

The enzyme catalyses D-ribose 5-phosphate + ATP = 5-phospho-alpha-D-ribose 1-diphosphate + AMP + H(+). It functions in the pathway metabolic intermediate biosynthesis; 5-phospho-alpha-D-ribose 1-diphosphate biosynthesis; 5-phospho-alpha-D-ribose 1-diphosphate from D-ribose 5-phosphate (route I): step 1/1. Activated by magnesium and inorganic phosphate. In terms of biological role, catalyzes the synthesis of phosphoribosylpyrophosphate (PRPP) that is essential for nucleotide synthesis. The sequence is that of Ribose-phosphate pyrophosphokinase 3 (PRPS1L1) from Homo sapiens (Human).